Reading from the N-terminus, the 1172-residue chain is DNA-directed RNA polymerases IV and V subunit 2 (1172 aa).

Asp786 is a Mg(2+) binding site. Residues Cys1108, Cys1111, Cys1133, and Cys1136 each coordinate Zn(2+). A C4-type zinc finger spans residues 1108–1136 (CRKCKTYANVIERTPSSGRKIRGPYCRVC).

This sequence belongs to the RNA polymerase beta chain family. In terms of assembly, component of the RNA polymerase IV and V complexes. Interacts with SSH1, NRPD1 and NRPE1. As to expression, mostly expressed in seedlings, flowers and roots, present ubiquitously, except in sperm cells.

It localises to the nucleus. The catalysed reaction is RNA(n) + a ribonucleoside 5'-triphosphate = RNA(n+1) + diphosphate. DNA-dependent RNA polymerase catalyzes the transcription of DNA into RNA using the four ribonucleoside triphosphates as substrates. Second largest component of RNA polymerases IV and V which mediate short-interfering RNAs (siRNA) accumulation and subsequent RNA-directed DNA methylation-dependent (RdDM) transcriptional gene silencing (TGS) of endogenous repeated sequences, including transposable elements. Proposed to contribute to the polymerase catalytic activity and forms the polymerase active center together with the largest subunit. Also required for full erasure of methylation when the RNA trigger is withdrawn. Required for intercellular RNA interference (RNAi) leading to systemic post-transcriptional gene silencing. Involved in the maintenance of post-transcriptional RNA silencing. During interphase, mediates siRNA-independent heterochromatin association and methylation into chromocenters and condensation and cytosine methylation at pericentromeric major repeats. Required for complete maintenance of the 35S promoter homology-dependent TGS in transgenic plants and for the initial establishment of DNA methylation. This is DNA-directed RNA polymerases IV and V subunit 2 (NRPD2) from Arabidopsis thaliana (Mouse-ear cress).